The sequence spans 108 residues: Putative septation protein SpoVG (108 aa).

Residues 84 to 108 (FEKQSSVETEPVTEENMETAENENE) form a disordered region. Acidic residues predominate over residues 94–108 (PVTEENMETAENENE).

The protein belongs to the SpoVG family.

In terms of biological role, could be involved in septation. The chain is Putative septation protein SpoVG from Finegoldia magna (strain ATCC 29328 / DSM 20472 / WAL 2508) (Peptostreptococcus magnus).